Here is a 535-residue protein sequence, read N- to C-terminus: Putative subtilisin-like proteinase 2 (535 aa).

The N-terminal stretch at 1-17 (MFFVGVAVLAALQSVWG) is a signal peptide. The 255-residue stretch at 221-475 (NWIFRVLQIK…IPRLGCKGRI (255 aa)) folds into the Peptidase S8 domain. Catalysis depends on charge relay system residues Asp255 and His277. Cysteines 369 and 400 form a disulfide. Ser420 acts as the Charge relay system in catalysis. Residues 489 to 509 (IVPLVFVVLITSALLYLLLIG) traverse the membrane as a helical segment.

The protein belongs to the peptidase S8 family.

The protein resides in the membrane. In terms of biological role, may be involved in the degradation of proteins for nutrient acquisition or possess a regulatory function by proteolytic activation of proproteins. This Encephalitozoon cuniculi (strain GB-M1) (Microsporidian parasite) protein is Putative subtilisin-like proteinase 2 (SPL2).